The chain runs to 556 residues: Membrane protein insertase YidC (556 aa).

The next 5 helical transmembrane spans lie at 6–26 (IVLYMALALIGLSLWNAWQID), 332–352 (LDLTVDYGILWFLSSLLFSLM), 358–378 (VVGNWGWSIVLVTVLIKLAFY), 428–448 (LGGCLPILIQIPVFIALYWVL), and 501–521 (VMMFLPILFTGLFWNFPSGLV).

It belongs to the OXA1/ALB3/YidC family. Type 1 subfamily. As to quaternary structure, interacts with the Sec translocase complex via SecD. Specifically interacts with transmembrane segments of nascent integral membrane proteins during membrane integration.

Its subcellular location is the cell inner membrane. Required for the insertion and/or proper folding and/or complex formation of integral membrane proteins into the membrane. Involved in integration of membrane proteins that insert both dependently and independently of the Sec translocase complex, as well as at least some lipoproteins. Aids folding of multispanning membrane proteins. This Legionella pneumophila (strain Lens) protein is Membrane protein insertase YidC.